The following is a 367-amino-acid chain: Heparan sulfate glucosamine 3-O-sulfotransferase 2 (367 aa).

The Cytoplasmic segment spans residues 1–19 (MAYRVLGRAGPPQPRRARR). A helical; Signal-anchor for type II membrane protein transmembrane segment spans residues 20–39 (LLFAFTLSLSCTYLCYSFLC). Residues 40–367 (CCDDLGRSRL…ETVGQDFRWE (328 aa)) are Lumenal-facing. The disordered stretch occupies residues 61–110 (AGGQKLLQKSRPCDPSGPTPSEPSAPSAPAAAVPAPRLSGSNHSGSPKLG). Low complexity predominate over residues 84-96 (SAPSAPAAAVPAP). The N-linked (GlcNAc...) asparagine glycan is linked to Asn-102. 124-128 (KGGTR) lines the 3'-phosphoadenylyl sulfate pocket. Substrate is bound by residues 146 to 152 (EPHFFDR) and 177 to 180 (KTPS). Asn-193 carries N-linked (GlcNAc...) asparagine glycosylation. Arg-205 and Ser-213 together coordinate 3'-phosphoadenylyl sulfate. N-linked (GlcNAc...) asparagine glycosylation is present at Asn-235. Residue 245-246 (WN) coordinates substrate. N-linked (GlcNAc...) asparagine glycosylation occurs at Asn-306. Residues Cys-313 and Cys-325 are joined by a disulfide bond. Position 330 to 334 (330 to 334 (KGRTH)) interacts with 3'-phosphoadenylyl sulfate.

This sequence belongs to the sulfotransferase 1 family. In terms of tissue distribution, highly expressed in the brain and weakly expressed in the heart, placenta, lung and skeletal muscle.

The protein localises to the golgi apparatus membrane. It carries out the reaction alpha-D-glucosaminyl-[heparan sulfate](n) + 3'-phosphoadenylyl sulfate = 3-sulfo-alpha-D-glucosaminyl-[heparan sulfate](n) + adenosine 3',5'-bisphosphate + H(+). In terms of biological role, sulfotransferase that utilizes 3'-phospho-5'-adenylyl sulfate (PAPS) to catalyze the transfer of a sulfo group to an N-unsubstituted glucosamine linked to a 2-O-sulfo iduronic acid unit on heparan sulfate. Catalyzes the O-sulfation of glucosamine in GlcA2S-GlcNS. Unlike HS3ST1/3-OST-1, does not convert non-anticoagulant heparan sulfate to anticoagulant heparan sulfate. The chain is Heparan sulfate glucosamine 3-O-sulfotransferase 2 (HS3ST2) from Homo sapiens (Human).